Consider the following 262-residue polypeptide: 2-keto-4-pentenoate hydratase 2 (262 aa).

It belongs to the hydratase/decarboxylase family. MhpD subfamily. It depends on a divalent metal cation as a cofactor.

The catalysed reaction is (S)-4-hydroxy-2-oxopentanoate = (2Z)-2-hydroxypenta-2,4-dienoate + H2O. The protein operates within aromatic compound metabolism; 3-phenylpropanoate degradation. Catalyzes the conversion of 2-hydroxypentadienoic acid (enolic form of 2-oxopent-4-enoate) to 4-hydroxy-2-ketopentanoic acid. The protein is 2-keto-4-pentenoate hydratase 2 of Dechloromonas aromatica (strain RCB).